The following is a 552-amino-acid chain: Urocanate hydratase (552 aa).

Residues 48–49 (GG), Gln126, 172–174 (GMG), Asp192, 238–239 (NA), 259–263 (QTSAH), 268–269 (YL), and Tyr317 contribute to the NAD(+) site. The active site involves Cys405. Gly487 contacts NAD(+).

It belongs to the urocanase family. Requires NAD(+) as cofactor.

It localises to the cytoplasm. The enzyme catalyses 4-imidazolone-5-propanoate = trans-urocanate + H2O. Its pathway is amino-acid degradation; L-histidine degradation into L-glutamate; N-formimidoyl-L-glutamate from L-histidine: step 2/3. Its function is as follows. Catalyzes the conversion of urocanate to 4-imidazolone-5-propionate. The protein is Urocanate hydratase of Streptomyces griseus subsp. griseus (strain JCM 4626 / CBS 651.72 / NBRC 13350 / KCC S-0626 / ISP 5235).